Consider the following 474-residue polypeptide: Trehalose-6-phosphate synthase (474 aa).

D-glucose 6-phosphate is bound at residue Arg10. 22–23 (GG) lines the UDP-alpha-D-glucose pocket. Positions 77 and 131 each coordinate D-glucose 6-phosphate. UDP-alpha-D-glucose contacts are provided by Arg263 and Lys268. Position 301 (Arg301) interacts with D-glucose 6-phosphate. Residues Phe340 and 366–370 (LVAKE) each bind UDP-alpha-D-glucose.

The protein belongs to the glycosyltransferase 20 family. Homotetramer.

The enzyme catalyses D-glucose 6-phosphate + UDP-alpha-D-glucose = alpha,alpha-trehalose 6-phosphate + UDP + H(+). It functions in the pathway glycan biosynthesis; trehalose biosynthesis. Functionally, probably involved in the osmoprotection via the biosynthesis of trehalose. Catalyzes the transfer of glucose from UDP-alpha-D-glucose (UDP-Glc) to D-glucose 6-phosphate (Glc-6-P) to form trehalose-6-phosphate. Acts with retention of the anomeric configuration of the UDP-sugar donor. This is Trehalose-6-phosphate synthase from Enterobacter sp. (strain 638).